The sequence spans 76 residues: MKKNIILNLIGLRCPEPIMIIRKTIRDMKDNEKILILSDDPATKRDIPNFCYFMEHKLLKNEIKVKPYRYLLKKGL.

Cys14 acts as the Cysteine persulfide intermediate in catalysis.

The protein belongs to the sulfur carrier protein TusA family. As to quaternary structure, interacts with IscS.

It localises to the cytoplasm. The protein operates within tRNA modification. Sulfur carrier protein involved in sulfur trafficking in the cell. Part of a sulfur-relay system required for 2-thiolation during synthesis of 2-thiouridine of the modified wobble base 5-methylaminomethyl-2-thiouridine (mnm(5)s(2)U) in tRNA. Interacts with IscS and stimulates its cysteine desulfurase activity. Accepts an activated sulfur from IscS, which is then transferred to TusD, and thus determines the direction of sulfur flow from IscS to 2-thiouridine formation. Also appears to be involved in sulfur transfer for the biosynthesis of molybdopterin. This Buchnera aphidicola subsp. Acyrthosiphon pisum (strain 5A) protein is Sulfur carrier protein TusA.